Consider the following 31-residue polypeptide: Branched-chain-amino-acid aminotransferase, mitochondrial (31 aa).

A mitochondrion-targeting transit peptide spans 1-27 (MAAAALRQIWARKFLPVPWLLCGPRRY).

Belongs to the class-IV pyridoxal-phosphate-dependent aminotransferase family. As to quaternary structure, homodimer. Pyridoxal 5'-phosphate serves as cofactor.

The protein localises to the mitochondrion. It carries out the reaction L-leucine + 2-oxoglutarate = 4-methyl-2-oxopentanoate + L-glutamate. The enzyme catalyses L-isoleucine + 2-oxoglutarate = (S)-3-methyl-2-oxopentanoate + L-glutamate. The catalysed reaction is L-valine + 2-oxoglutarate = 3-methyl-2-oxobutanoate + L-glutamate. In terms of biological role, catalyzes the first reaction in the catabolism of the essential branched chain amino acids leucine, isoleucine, and valine. May also function as a transporter of branched chain alpha-keto acids. This Sus scrofa (Pig) protein is Branched-chain-amino-acid aminotransferase, mitochondrial (BCAT2).